The sequence spans 441 residues: Ribosomal protein uS12 methylthiotransferase RimO (441 aa).

One can recognise an MTTase N-terminal domain in the interval 7–117; it reads PKISFVSLGC…VLEAVHRARP (111 aa). 6 residues coordinate [4Fe-4S] cluster: Cys16, Cys52, Cys81, Cys148, Cys152, and Cys155. The Radical SAM core domain maps to 134-371; it reads LTPRHYAYLK…MARQQAISAR (238 aa). The 67-residue stretch at 374–440 folds into the TRAM domain; the sequence is KRKVGTRQQV…AYDLHGTVAG (67 aa).

This sequence belongs to the methylthiotransferase family. RimO subfamily. It depends on [4Fe-4S] cluster as a cofactor.

Its subcellular location is the cytoplasm. The enzyme catalyses L-aspartate(89)-[ribosomal protein uS12]-hydrogen + (sulfur carrier)-SH + AH2 + 2 S-adenosyl-L-methionine = 3-methylsulfanyl-L-aspartate(89)-[ribosomal protein uS12]-hydrogen + (sulfur carrier)-H + 5'-deoxyadenosine + L-methionine + A + S-adenosyl-L-homocysteine + 2 H(+). Its function is as follows. Catalyzes the methylthiolation of an aspartic acid residue of ribosomal protein uS12. This is Ribosomal protein uS12 methylthiotransferase RimO from Rhodopseudomonas palustris (strain ATCC BAA-98 / CGA009).